A 270-amino-acid polypeptide reads, in one-letter code: Small ribosomal subunit protein bS1m (270 aa).

Residues 218 to 250 (TKQGFKHLGPKPLAYTEKKRETTKQSTKNNVFQ) are disordered.

The protein belongs to the bacterial ribosomal protein bS1 family.

Its subcellular location is the mitochondrion. The sequence is that of Small ribosomal subunit protein bS1m (RPS1) from Marchantia polymorpha (Common liverwort).